The chain runs to 392 residues: Protein FAM53C (392 aa).

Residue methionine 1 is modified to N-acetylmethionine. Positions 78 to 119 (LRPPSRGNSPKEQPFSQVLRPEPPDPEKLPVPPAPPSKRHCR) are disordered. Polar residues predominate over residues 83–93 (RGNSPKEQPFS). Phosphoserine occurs at positions 122, 162, 232, 234, 255, and 273. Disordered regions lie at residues 141-167 (LWTP…PKRV) and 204-294 (RPCA…EDPR). Over residues 241-256 (ASRFLPSARSSPASSP) the composition is skewed to low complexity. A compositionally biased stretch (basic and acidic residues) spans 278 to 294 (LDARKTGVKRRHEEDPR). Serine 299 is modified (phosphoserine). The tract at residues 341–364 (ASCSPTGGSSQVLSESEEEEEGAV) is disordered.

The protein belongs to the FAM53 family.

This Homo sapiens (Human) protein is Protein FAM53C.